Here is a 341-residue protein sequence, read N- to C-terminus: Methionine import ATP-binding protein MetN 1 (341 aa).

The 240-residue stretch at 2 to 241 folds into the ABC transporter domain; the sequence is IEFRQVSKSF…PKTTIAQNFV (240 aa). ATP is bound at residue 38 to 45; that stretch reads GYSGAGKS.

The protein belongs to the ABC transporter superfamily. Methionine importer (TC 3.A.1.24) family. In terms of assembly, the complex is composed of two ATP-binding proteins (MetN), two transmembrane proteins (MetI) and a solute-binding protein (MetQ).

The protein resides in the cell membrane. The catalysed reaction is L-methionine(out) + ATP + H2O = L-methionine(in) + ADP + phosphate + H(+). The enzyme catalyses D-methionine(out) + ATP + H2O = D-methionine(in) + ADP + phosphate + H(+). Functionally, part of the ABC transporter complex MetNIQ involved in methionine import. Responsible for energy coupling to the transport system. The protein is Methionine import ATP-binding protein MetN 1 of Staphylococcus aureus (strain Mu50 / ATCC 700699).